We begin with the raw amino-acid sequence, 644 residues long: MNPNNRSEHDTIKTTENNEVPTNHVQYPLAETPNPTLEDLNYKEFLRMTADNNTEALDSSTTKDVIQKGISVVGDLLGVVGFPFGGALVSFYTNFLNTIWPSEDPWKAFMEQVEALMDQKIADYAKNKALAELQGLQNNVEDYVSALSSWQKNPVSSRNPHSQGRIRELFSQAESHFRNSMPSFAISGYEVLFLTTYAQAANTHLFLLKDAQIYGEEWGYEKEDIAEFYKRQLKLTQEYTDHCVKWYNVGLDKLRGSSYESWVNFNRYRREMTLTVLDLIALFPLYDVRLYPKEVKTELTRDVLTDPIVGVNNLRGYGTTFSNIENYIRKPHLFDYLHRIQFHTRFQPGYYGNDSFNYWSGNYVSTRPSIGSNDIITSPFYGNKSSEPVQNLEFNGEKVYRAVANTNLAVWPSAVYSGVTKVEFSQYNDQTDEASTQTYDSKRNVGAVSWDSIDQLPPETTDEPLEKGYSHQLNYVMCFLMQGSRGTIPVLTWTHKSVDFFNMIDSKKITQLPLVKAYKLQSGASVVAGPRFTGGDIIQCTENGSAATIYVTPDVSYSQKYRARIHYASTSQITFTLSLDGAPFNQYYFDKTINKGDTLTYNSFNLASFSTPFELSGNNLQIGVTGLSAGDKVYIDKIEFIPVN.

Positions M1 to K13 are enriched in basic and acidic residues. The segment at M1–V20 is disordered. Residues M1–L57 constitute a propeptide, removed in mature form.

The protein belongs to the delta endotoxin family.

Its function is as follows. Promotes colloidosmotic lysis by binding to the midgut epithelial cells of Coleoptera. This is Pesticidal crystal protein Cry3Aa (cry3Aa) from Bacillus thuringiensis subsp. san diego.